The following is a 226-amino-acid chain: Putative uroporphyrinogen-III synthase (226 aa).

It belongs to the uroporphyrinogen-III synthase family.

It carries out the reaction hydroxymethylbilane = uroporphyrinogen III + H2O. The protein operates within porphyrin-containing compound metabolism; protoporphyrin-IX biosynthesis; coproporphyrinogen-III from 5-aminolevulinate: step 3/4. In terms of biological role, catalyzes cyclization of the linear tetrapyrrole, hydroxymethylbilane, to the macrocyclic uroporphyrinogen III. This chain is Putative uroporphyrinogen-III synthase, found in Archaeoglobus fulgidus (strain ATCC 49558 / DSM 4304 / JCM 9628 / NBRC 100126 / VC-16).